Consider the following 83-residue polypeptide: Cytochrome b559 subunit alpha (83 aa).

The chain crosses the membrane as a helical span at residues 21-35 (VIHSITIPSLFIAGW). Residue His23 coordinates heme.

It belongs to the PsbE/PsbF family. In terms of assembly, heterodimer of an alpha subunit and a beta subunit. PSII is composed of 1 copy each of membrane proteins PsbA, PsbB, PsbC, PsbD, PsbE, PsbF, PsbH, PsbI, PsbJ, PsbK, PsbL, PsbM, PsbT, PsbX, PsbY, PsbZ, Psb30/Ycf12, at least 3 peripheral proteins of the oxygen-evolving complex and a large number of cofactors. It forms dimeric complexes. It depends on heme b as a cofactor.

The protein localises to the plastid. The protein resides in the chloroplast thylakoid membrane. In terms of biological role, this b-type cytochrome is tightly associated with the reaction center of photosystem II (PSII). PSII is a light-driven water:plastoquinone oxidoreductase that uses light energy to abstract electrons from H(2)O, generating O(2) and a proton gradient subsequently used for ATP formation. It consists of a core antenna complex that captures photons, and an electron transfer chain that converts photonic excitation into a charge separation. This Chlorella vulgaris (Green alga) protein is Cytochrome b559 subunit alpha.